The chain runs to 536 residues: Probable 1,4-beta-D-glucan cellobiohydrolase B (536 aa).

Positions 1–21 are cleaved as a signal peptide; that stretch reads MSSFQVYRAALLLSILATANA. The tract at residues 22–458 is catalytic; sequence QQVGTYTTET…SNIKFGPIGS (437 aa). The active-site Nucleophile is the glutamate 233. Glutamate 238 serves as the catalytic Proton donor. Asparagine 351 and asparagine 414 each carry an N-linked (GlcNAc...) asparagine glycan. A ser/Thr-rich linker region spans residues 459 to 500; it reads TYSSGSSSGSGSSSSSSSTTTKATSTTLKTTSTTSSGSSSTS. The interval 464-499 is disordered; sequence SSSGSGSSSSSSSTTTKATSTTLKTTSTTSSGSSST. The CBM1 domain maps to 500 to 536; the sequence is SAAQAYGQCGGQGWTGPTTCVSGYTCTYENAYYSQCL. Intrachain disulfides connect cysteine 508-cysteine 525 and cysteine 519-cysteine 535.

It belongs to the glycosyl hydrolase 7 (cellulase C) family.

The protein resides in the secreted. It catalyses the reaction Hydrolysis of (1-&gt;4)-beta-D-glucosidic linkages in cellulose and cellotetraose, releasing cellobiose from the non-reducing ends of the chains.. The biological conversion of cellulose to glucose generally requires three types of hydrolytic enzymes: (1) Endoglucanases which cut internal beta-1,4-glucosidic bonds; (2) Exocellobiohydrolases that cut the disaccharide cellobiose from the non-reducing end of the cellulose polymer chain; (3) Beta-1,4-glucosidases which hydrolyze the cellobiose and other short cello-oligosaccharides to glucose. The chain is Probable 1,4-beta-D-glucan cellobiohydrolase B (cbhB) from Aspergillus niger (strain ATCC MYA-4892 / CBS 513.88 / FGSC A1513).